The sequence spans 795 residues: Phenylalanine--tRNA ligase beta subunit (795 aa).

One can recognise a tRNA-binding domain in the interval alanine 39–arginine 148. The B5 domain occupies proline 401–asparagine 476. Mg(2+) is bound by residues aspartate 454, aspartate 460, glutamate 463, and glutamate 464. The 94-residue stretch at serine 701–arginine 794 folds into the FDX-ACB domain.

Belongs to the phenylalanyl-tRNA synthetase beta subunit family. Type 1 subfamily. Tetramer of two alpha and two beta subunits. Mg(2+) is required as a cofactor.

Its subcellular location is the cytoplasm. It catalyses the reaction tRNA(Phe) + L-phenylalanine + ATP = L-phenylalanyl-tRNA(Phe) + AMP + diphosphate + H(+). The sequence is that of Phenylalanine--tRNA ligase beta subunit from Vibrio vulnificus (strain YJ016).